A 149-amino-acid chain; its full sequence is UPF0756 membrane protein BBR47_32760 (149 aa).

5 helical membrane-spanning segments follow: residues 3 to 23 (WISI…NATV), 48 to 68 (HGLQ…LASG), 85 to 105 (LLAV…TVLM), 106 to 126 (SQNP…VTFF), and 128 to 148 (GVAV…QFLP).

This sequence belongs to the UPF0756 family.

The protein localises to the cell membrane. This is UPF0756 membrane protein BBR47_32760 from Brevibacillus brevis (strain 47 / JCM 6285 / NBRC 100599).